An 801-amino-acid polypeptide reads, in one-letter code: Lon protease 2 (801 aa).

One can recognise a Lon N-terminal domain in the interval 14-209 (LPMLPVRDIV…LVNEILAAEL (196 aa)). ATP is bound at residue 361–368 (GPPGVGKT). The 182-residue stretch at 597–778 (DSQVGVVQGL…DEVFAVAFDK (182 aa)) folds into the Lon proteolytic domain. Active-site residues include Ser684 and Lys727. The segment covering 780 to 791 (AKGQEKKPAAKK) has biased composition (basic and acidic residues). The tract at residues 780–801 (AKGQEKKPAAKKDPKKTKSLAA) is disordered. The segment covering 792–801 (DPKKTKSLAA) has biased composition (basic residues).

It belongs to the peptidase S16 family. Homohexamer. Organized in a ring with a central cavity.

It localises to the cytoplasm. It carries out the reaction Hydrolysis of proteins in presence of ATP.. Its function is as follows. ATP-dependent serine protease that mediates the selective degradation of mutant and abnormal proteins as well as certain short-lived regulatory proteins. Required for cellular homeostasis and for survival from DNA damage and developmental changes induced by stress. Degrades polypeptides processively to yield small peptide fragments that are 5 to 10 amino acids long. Binds to DNA in a double-stranded, site-specific manner. The chain is Lon protease 2 from Bdellovibrio bacteriovorus (strain ATCC 15356 / DSM 50701 / NCIMB 9529 / HD100).